A 218-amino-acid chain; its full sequence is Nuclear cap-binding protein subunit 2 (218 aa).

Residues Tyr-24, Tyr-49, 118–122 (TIDLD), 129–133 (RQFGR), and 139–140 (QV) each bind mRNA. An RRM domain is found at 46-124 (ATIYVGNLSF…REITIDLDPG (79 aa)). The span at 176–194 (DPHKNHHHHHHGHHHHHGQ) shows a compositional bias: basic residues. The segment at 176–200 (DPHKNHHHHHHGHHHHHGQPHAAAA) is disordered.

It belongs to the RRM NCBP2 family. Component of the nuclear cap-binding complex (CBC).

It is found in the nucleus. Component of the cap-binding complex (CBC) involved in the nuclear export of capped U snRNAs. The CBC complex is required for efficient pre-mRNA splicing through efficient commitment complex and spliceosome formation; and involved in rRNA processing at sites A0, A1 and A2. This is Nuclear cap-binding protein subunit 2 (CBC2) from Eremothecium gossypii (strain ATCC 10895 / CBS 109.51 / FGSC 9923 / NRRL Y-1056) (Yeast).